The following is a 349-amino-acid chain: Phosphoribosylformylglycinamidine cyclo-ligase (349 aa).

The protein belongs to the AIR synthase family.

It is found in the cytoplasm. The enzyme catalyses 2-formamido-N(1)-(5-O-phospho-beta-D-ribosyl)acetamidine + ATP = 5-amino-1-(5-phospho-beta-D-ribosyl)imidazole + ADP + phosphate + H(+). It functions in the pathway purine metabolism; IMP biosynthesis via de novo pathway; 5-amino-1-(5-phospho-D-ribosyl)imidazole from N(2)-formyl-N(1)-(5-phospho-D-ribosyl)glycinamide: step 2/2. In Listeria monocytogenes serovar 1/2a (strain ATCC BAA-679 / EGD-e), this protein is Phosphoribosylformylglycinamidine cyclo-ligase.